The following is a 578-amino-acid chain: A-type ATP synthase subunit A (578 aa).

Position 228 to 235 (228 to 235) interacts with ATP; it reads GPFGSGKT.

It belongs to the ATPase alpha/beta chains family. As to quaternary structure, has multiple subunits with at least A(3), B(3), C, D, E, F, H, I and proteolipid K(x).

The protein resides in the cell membrane. It catalyses the reaction ATP + H2O + 4 H(+)(in) = ADP + phosphate + 5 H(+)(out). Functionally, component of the A-type ATP synthase that produces ATP from ADP in the presence of a proton gradient across the membrane. The A chain is the catalytic subunit. This is A-type ATP synthase subunit A from Methanosarcina barkeri (strain Fusaro / DSM 804).